A 497-amino-acid chain; its full sequence is Di-/tripeptide transporter (497 aa).

The next 12 helical transmembrane spans lie at 3 to 23, 26 to 46, 57 to 77, 84 to 104, 119 to 139, 155 to 175, 199 to 219, 227 to 247, 294 to 314, 321 to 341, 372 to 392, and 452 to 472; these read AILL…MSQT, ASIM…GGWL, VFYG…PAGV, IALI…MVGG, IFVF…PWAA, AGFS…VLGG, IKWV…MAGV, VITL…VMMF, FIIL…KVII, LVLL…TFVL, GIEI…LIIL, and IVII…WSYI.

The protein belongs to the major facilitator superfamily. Proton-dependent oligopeptide transporter (POT/PTR) (TC 2.A.17) family.

Its subcellular location is the cell membrane. In terms of biological role, proton-dependent uptake of di- or tri-peptides. This chain is Di-/tripeptide transporter (dtpT), found in Lactobacillus helveticus (Lactobacillus suntoryeus).